A 61-amino-acid chain; its full sequence is DNA-binding protein 7a (61 aa).

Residues 37–61 (NGKTGRGAVSEKDAPKELLEKLEKK) form a disordered region. Residues 45-61 (VSEKDAPKELLEKLEKK) are compositionally biased toward basic and acidic residues.

This sequence belongs to the 7 kDa DNA-binding/endoribonuclease P2 family. As to quaternary structure, monomer.

It is found in the cytoplasm. Functionally, can constrain negative DNA supercoils. May be involved in maintaining the integrity of the genome at high temperature. This Acidianus hospitalis (strain W1) protein is DNA-binding protein 7a.